Here is a 127-residue protein sequence, read N- to C-terminus: UPF0102 protein Gura_3756 (127 aa).

It belongs to the UPF0102 family.

This chain is UPF0102 protein Gura_3756, found in Geotalea uraniireducens (strain Rf4) (Geobacter uraniireducens).